Consider the following 574-residue polypeptide: uncharacterized protein (574 aa).

Positions 297-317 (SAASKPRKRKKDEVSGAQVNS) are disordered.

This is an uncharacterized protein from Mus musculus (Mouse).